The following is a 346-amino-acid chain: MRVADFSFDLPDELIARYPTAQRNASRLLTLSGENSELADKKFTDLFNLINPGDLMVFNNTRVIPARLFGQKSTGGKLEILVERMLDDKRILAHVRSSKSPKVDTLIDLDGGYQMKMLARHDALFELELQSDKTILEVLEDVGHMPLPPYIDRPDEDTDKERYQTVYNQTPGAVAAPTAGLHFDDAMLADLKAKGVNIAFVTLHVGAGTFQPVRVDNVLEHKMHSEWANVSQEVVDLIAQTKAAGNRVVAVGTTSVRSLESAARASGDSPLEAFSGDTDIFIYPGFQFKVVDAMVTNFHLPESTLIMLLSAFAGYEAVMKAYQHAITQKYRFFSYGDAMFVTKKAP.

Belongs to the QueA family. As to quaternary structure, monomer.

The protein localises to the cytoplasm. It catalyses the reaction 7-aminomethyl-7-carbaguanosine(34) in tRNA + S-adenosyl-L-methionine = epoxyqueuosine(34) in tRNA + adenine + L-methionine + 2 H(+). It participates in tRNA modification; tRNA-queuosine biosynthesis. Its function is as follows. Transfers and isomerizes the ribose moiety from AdoMet to the 7-aminomethyl group of 7-deazaguanine (preQ1-tRNA) to give epoxyqueuosine (oQ-tRNA). The polypeptide is S-adenosylmethionine:tRNA ribosyltransferase-isomerase (Shewanella frigidimarina (strain NCIMB 400)).